The primary structure comprises 344 residues: N-acetyl-gamma-glutamyl-phosphate reductase (344 aa).

The active site involves cysteine 149.

The protein belongs to the NAGSA dehydrogenase family. Type 1 subfamily.

It is found in the cytoplasm. It catalyses the reaction N-acetyl-L-glutamate 5-semialdehyde + phosphate + NADP(+) = N-acetyl-L-glutamyl 5-phosphate + NADPH + H(+). The protein operates within amino-acid biosynthesis; L-arginine biosynthesis; N(2)-acetyl-L-ornithine from L-glutamate: step 3/4. Its function is as follows. Catalyzes the NADPH-dependent reduction of N-acetyl-5-glutamyl phosphate to yield N-acetyl-L-glutamate 5-semialdehyde. The protein is N-acetyl-gamma-glutamyl-phosphate reductase of Acidithiobacillus ferrooxidans (strain ATCC 23270 / DSM 14882 / CIP 104768 / NCIMB 8455) (Ferrobacillus ferrooxidans (strain ATCC 23270)).